Reading from the N-terminus, the 921-residue chain is TRPM8 channel-associated factor 1 (921 aa).

Residues 542-841 (YCWMSTGLYI…TYLQLQEAFG (300 aa)) form the Peptidase M60 domain.

The protein belongs to the TCAF family. As to quaternary structure, interacts with TRPM8 (via N-terminus and C-terminus domains); the interaction inhibits TRPM8 channel activity. Interacts with TRPV6.

The protein resides in the cell membrane. Its function is as follows. Positively regulates the plasma membrane cation channel TRPM8 activity. Involved in the recruitment of TRPM8 to the cell surface. Promotes prostate cancer cell migration inhibition in a TRPM8-dependent manner. The chain is TRPM8 channel-associated factor 1 from Pongo abelii (Sumatran orangutan).